The chain runs to 134 residues: MSNTENKQKRVSVGKDIATRRRVARARRHFRIRKTLRGTPEAPRLVVHRSSRHMHVQIIDDLAGHTLAAASSIEPEVRAVEGDKKAKGAKVGQLIAERAKAAGIEQVVFDRAGYKYHGRVAALADAAREGGLKF.

The protein belongs to the universal ribosomal protein uL18 family. As to quaternary structure, part of the 50S ribosomal subunit; part of the 5S rRNA/L5/L18/L25 subcomplex. Contacts the 5S and 23S rRNAs.

Its function is as follows. This is one of the proteins that bind and probably mediate the attachment of the 5S RNA into the large ribosomal subunit, where it forms part of the central protuberance. This Corynebacterium efficiens (strain DSM 44549 / YS-314 / AJ 12310 / JCM 11189 / NBRC 100395) protein is Large ribosomal subunit protein uL18.